A 359-amino-acid polypeptide reads, in one-letter code: Protein Wnt-5b (359 aa).

The N-terminal stretch at 1–17 (MPSLLLLFTAALLSSWA) is a signal peptide. An intrachain disulfide couples Cys-83 to Cys-94. 2 N-linked (GlcNAc...) asparagine glycosylation sites follow: Asn-93 and Asn-99. Disulfide bonds link Cys-133–Cys-141, Cys-143–Cys-161, Cys-217–Cys-231, Cys-219–Cys-226, Cys-288–Cys-319, Cys-304–Cys-314, Cys-318–Cys-358, Cys-334–Cys-349, Cys-336–Cys-346, and Cys-341–Cys-342. Ser-223 carries O-palmitoleoyl serine; by PORCN lipidation. 2 N-linked (GlcNAc...) asparagine glycosylation sites follow: Asn-291 and Asn-305.

Belongs to the Wnt family. In terms of assembly, interacts with PORCN. Palmitoleoylation is required for efficient binding to frizzled receptors. Depalmitoleoylation leads to Wnt signaling pathway inhibition.

The protein resides in the secreted. The protein localises to the extracellular space. Its subcellular location is the extracellular matrix. Its function is as follows. Ligand for members of the frizzled family of seven transmembrane receptors. Probable developmental protein. May be a signaling molecule which affects the development of discrete regions of tissues. Is likely to signal over only few cell diameters. This is Protein Wnt-5b (WNT5B) from Homo sapiens (Human).